A 442-amino-acid polypeptide reads, in one-letter code: MSTTPMAAPPGADLKPVTSSRGRSSTSDEQKLRSSCESCAQSKLKCSGDKPACARCAKRGLACKYVIAKRGGRKPKGYTSTNDNNPSKRREDSHSPAASQWSSTGHLEQSYPYCDPTISGSASPALIAMSDFYNPMDQNLPDAPTSHSDISMDFDFNDCFSLGFPSSNELSDFCNVGSTDMFSPSLDSSSSSSTGPERQLLCDGFSLTDDAMSDLFPLSPPEPQQQISCTPTDKNPHSYQEACLNGSCSCLVEALSLMKQLVSSPARNGAASPPNIQTIIDRNEATIESVRRMLECSCSQDDGYLLSVMSLIIFRVLGWYATVARQTACDVDSQPSRSPQSSISSAGSGYCLEGADSARMAAQLVLSEIHHVRRIVHQLSLKLKAQGEKERSRPETRMEGLEAMDNEMTLPLSATMYDQLDVDLKKRLRALSWEMIDRLRRY.

Residues 1–34 (MSTTPMAAPPGADLKPVTSSRGRSSTSDEQKLRS) form a disordered region. Residues 36–63 (CESCAQSKLKCSGDKPACARCAKRGLAC) constitute a DNA-binding region (zn(2)-C6 fungal-type). The disordered stretch occupies residues 74 to 107 (KPKGYTSTNDNNPSKRREDSHSPAASQWSSTGHL). A compositionally biased stretch (polar residues) spans 96–107 (PAASQWSSTGHL).

It localises to the nucleus. Its function is as follows. Transcription factor that positively regulates the expression of the gene cluster that mediates the biosynthesis of an emodin derivative that may be involved in black Sigatoka disease of banana. The protein is Transcription factor MYCFIDRAFT_198930 of Pseudocercospora fijiensis (strain CIRAD86) (Black leaf streak disease fungus).